Here is an 839-residue protein sequence, read N- to C-terminus: MMSGVMLLVFAIFLIIAFTLIYLAIYFKFDETTYTKRLQVMIEYIKRTNADEPTPNVIGYVSDITQNTYTVTWFNTVDLSTYQESVHDDRNEIFDFLNQKLQPVDRIVHDRVRANDENPNEFILSGDKDDVTMKCPAYFNFDYAQLKCVPVPPCDNKPAGRYPMDERLLDTLVLNQHLDKDYSSNEHLYHPTFYLRCFANGAHAVEECPDNYTFDAKTRQCKVNELCENRPDGYILSYFPSNLLVNQFMQCVSGRHVVRECPANKIFDRNLMSCVEAHPCTFNGAGHTYITADISDAQYFKCLNNNESQLMTCINRIRNSDNQYECSGDSRCIDLPNGTGQQVFKHADDDISYNSGQLVCDNFEIISNIECDQSNVFENKLFMDKFRLNMQFPTEVFDGTACVPATADNVNFLRSTFAIENIPNHYDIDMQTSMLGKIEMIKQLVSKDLSLNNDAIFAQWLLYARDKNAIGLNPLTGEPIDCFGNNLYDVFDARRANVCKDLGKSVLKTLNFGDGEFLNVLSDTLTGKDEDYRQFCAISYENGQKIVENEHFQRRILTNILQSDVCANIYTTLYQKYTTLNPKYTTTPLQYNRILVKRPKNIEIYGANTRLKNATIPKNATTISPVFNPFENQPNNRQNDSISPLFNPFQTTDAVWYSEPDGDEAVAPPPTAPPPPSEPEPEPEPELPSPLILDNKDLFYSCHYSVPFFKLTSCHAENDVIINALNELRNNVKVDADCESAKDLSHVLNAYAYVGNGIGCRSAYDGDAIVVKKEAVPSHVYANLNTQSNDGVKYNRWLHVKNDQYMACPEELYDNDEFKCNVESDKLYYLDNLQEDSIV.

The first 23 residues, Met-1–Leu-23, serve as a signal peptide directing secretion. The segment at Cys-148–Cys-197 adopts a C2HC BV-type zinc-finger fold. 2 cysteine pairs are disulfide-bonded: Cys-208–Cys-221 and Cys-261–Cys-274. Asn-211 is a glycosylation site (N-linked (GlcNAc...) asparagine; by host). A Chitin-binding type-2 domain is found at Asn-224–Phe-282. Residues Asn-306, Asn-337, Asn-613, Asn-619, and Asn-639 are each glycosylated (N-linked (GlcNAc...) asparagine; by host). 2 disordered regions span residues Ser-624–Pro-644 and Glu-659–Pro-690. Residues Ala-667–Glu-678 are compositionally biased toward pro residues.

The protein resides in the virion. Its function is as follows. Probable capsid-associated protein. This chain is Capsid-associated protein Vp91 (p95), found in Bombyx mori nuclear polyhedrosis virus (BmNPV).